Reading from the N-terminus, the 363-residue chain is Aspartate-semialdehyde dehydrogenase (363 aa).

NADP(+) is bound by residues T15, G16, S17, V18, S40, S43, and L87. Catalysis depends on C154, which acts as the Acyl-thioester intermediate. G186 provides a ligand contact to NADP(+). Catalysis depends on H251, which acts as the Proton acceptor. N341 serves as a coordination point for NADP(+).

The protein belongs to the aspartate-semialdehyde dehydrogenase family. In terms of assembly, homotetramer; dimer of dimers.

It is found in the cytoplasm. Its subcellular location is the cytosol. The protein resides in the nucleus. The catalysed reaction is L-aspartate 4-semialdehyde + phosphate + NADP(+) = 4-phospho-L-aspartate + NADPH + H(+). It participates in amino-acid biosynthesis; L-methionine biosynthesis via de novo pathway; L-homoserine from L-aspartate: step 2/3. The protein operates within amino-acid biosynthesis; L-threonine biosynthesis; L-threonine from L-aspartate: step 2/5. With respect to regulation, inhibited by 4-amino-3-hydroxynaphthalene-1-sulfonic acid and the competitive inhibitor 1,4-benzoquinone and derivates such as 2-chloro-3-methoxy-1,4-naphthoquinone, 2,3-dichloro-1,4-naphthoquinone, 2-chloro-1,4-naphthoquinone, 2-bromo-1,4-naphthoquinone and 2,3-dichloro-5,8-dihydroxy-1,4-naphthoquinone. In terms of biological role, catalyzes the NADPH-dependent formation of L-aspartate 4-semialdehyde (L-ASA) by the reductive dephosphorylation of 4-phospho-L-aspartate. Mediates the second step in the biosynthesis of amino acids that derive from aspartate (the aspartate family of amino acids), including methioinine and threonine, the latter of which is a precursor to isoleucine. The protein is Aspartate-semialdehyde dehydrogenase of Aspergillus fumigatus (strain ATCC MYA-4609 / CBS 101355 / FGSC A1100 / Af293) (Neosartorya fumigata).